Consider the following 67-residue polypeptide: Gene 51 protein (67 aa).

This chain is Gene 51 protein (51), found in Mycobacterium (Mycobacteriophage L5).